The chain runs to 850 residues: Adenylate cyclase (850 aa).

The interval 1-535 (MYLYIETLKQ…DISHHFPLRL (535 aa)) is catalytic. The interval 541–850 (KALYSPCEIR…SLPTKQCQLH (310 aa)) is regulatory.

It belongs to the adenylyl cyclase class-1 family.

It is found in the cytoplasm. It carries out the reaction ATP = 3',5'-cyclic AMP + diphosphate. Its activity is regulated as follows. The regulatory domain is involved in the regulation of cyclase activity by the carbon source. This Yersinia pestis protein is Adenylate cyclase (cya).